The chain runs to 555 residues: Connector enhancer of kinase suppressor of ras 3 (555 aa).

The region spanning 7–72 (WSPKQVVDWT…LEAVDLLCAL (66 aa)) is the SAM domain. The 95-residue stretch at 80–174 (NMKNLVLKLR…TTVQKDCFVA (95 aa)) folds into the CRIC domain. In terms of domain architecture, PDZ spans 211–293 (EVHLPNIKPG…GVVLLLKKRP (83 aa)). Disordered regions lie at residues 309–334 (WKPP…DTSL), 347–390 (PPPP…FLDQ), and 517–537 (IPFQ…KSSS). In terms of domain architecture, DUF1170 spans 325–546 (SPESTMDTSL…STEPSLLVSW (222 aa)). S381 and S383 each carry phosphoserine.

Belongs to the CNKSR family. In terms of assembly, interacts with epithelial sodium channel ENaC. Interacts directly with SCNN1A (ENaC subunit alpha) and SCNN1B (ENaC subunit beta) C-terminal tails. Interacts with ENaC regulatory proteins NEDD4L, RAF1 and SGK1.

Its subcellular location is the cytoplasm. It is found in the apical cell membrane. In terms of biological role, involved in transepithelial sodium transport. Regulates aldosterone-induced and epithelial sodium channel (ENaC)-mediated sodium transport through regulation of ENaC cell surface expression. Acts as a scaffold protein coordinating the assembly of an ENaC-regulatory complex (ERC). This chain is Connector enhancer of kinase suppressor of ras 3 (CNKSR3), found in Homo sapiens (Human).